The sequence spans 181 residues: Cytochrome c-type biogenesis protein CcmE (181 aa).

Residues 1–8 (MNPRRKSR) are Cytoplasmic-facing. The helical; Signal-anchor for type II membrane protein transmembrane segment at 9-29 (LKVVVSIIFGVAVAAGLTLYA) threads the bilayer. Topologically, residues 30–181 (LSQNIDLFYT…TLKTLQGEAN (152 aa)) are periplasmic. Histidine 131 and tyrosine 135 together coordinate heme. 2 stretches are compositionally biased toward basic and acidic residues: residues 135–148 (YMPPELGDKLKEQH) and 156–166 (ADLKGTSARDK). Positions 135–166 (YMPPELGDKLKEQHGAAGISEADLKGTSARDK) are disordered.

The protein belongs to the CcmE/CycJ family.

Its subcellular location is the cell inner membrane. Heme chaperone required for the biogenesis of c-type cytochromes. Transiently binds heme delivered by CcmC and transfers the heme to apo-cytochromes in a process facilitated by CcmF and CcmH. In Actinobacillus pleuropneumoniae serotype 7 (strain AP76), this protein is Cytochrome c-type biogenesis protein CcmE.